A 332-amino-acid chain; its full sequence is MEAQNQEVAALVEKIAGLHAAISKLPSLSPSAEVDALFTDLVTACVPASPVDVAKLGPEAQAMREELIRLCSAAEGHLEAHYADMLAAFDNPLDHLARFPYYGNYVNLSKLEYDLLVRYVPGIAPTRVAFVGSGPLPFSSLVLAAHHLPDAVFDNYDRCGAANERARRLFRGADEGLGARMAFHTADVATLTGELGAYDVVFLAALVGMAAEEKAGVIAHLGAHMADGAALVVRSAHGARGFLYPIVDPEDVRRGGFDVLAVCHPEDEVINSVIVARKVGAAAAAAAARRDELADSRGVVLPVVGPPSTCCKVEASAVEKAEEFAANKELSV.

The protein belongs to the nicotianamine synthase (NAS)-like family. In terms of tissue distribution, expressed in roots.

It carries out the reaction 3 S-adenosyl-L-methionine = nicotianamine + 3 S-methyl-5'-thioadenosine + 3 H(+). Synthesizes nicotianamine, a polyamine that is the first intermediate in the synthesis of the phytosiderophores of the mugineic acid type found in gramineae which serve as a sensor for the physiological iron status within the plant, and/or might be involved in the transport of iron. This is Nicotianamine synthase 1 (NAS1) from Oryza sativa subsp. indica (Rice).